We begin with the raw amino-acid sequence, 889 residues long: DNA gyrase subunit A (889 aa).

Residues 35–501 enclose the Topo IIA-type catalytic domain; that stretch reads LPDVRDGLKP…GFEDLEDEDL (467 aa). The O-(5'-phospho-DNA)-tyrosine intermediate role is filled by Tyr-123. The short motif at 528-534 is the GyrA-box element; the sequence is QNRGGRG. The tract at residues 810 to 889 is disordered; it reads VKEDAEDETN…IQQSSDEDEE (80 aa). Acidic residues predominate over residues 813-823; the sequence is DAEDETNEDEQ. Residues 863 to 875 show a composition bias toward basic and acidic residues; sequence DGRIEVRQDFMDR. Over residues 876–889 the composition is skewed to acidic residues; the sequence is VEEDIQQSSDEDEE.

Belongs to the type II topoisomerase GyrA/ParC subunit family. As to quaternary structure, heterotetramer, composed of two GyrA and two GyrB chains. In the heterotetramer, GyrA contains the active site tyrosine that forms a transient covalent intermediate with DNA, while GyrB binds cofactors and catalyzes ATP hydrolysis.

It localises to the cytoplasm. It catalyses the reaction ATP-dependent breakage, passage and rejoining of double-stranded DNA.. Functionally, a type II topoisomerase that negatively supercoils closed circular double-stranded (ds) DNA in an ATP-dependent manner to modulate DNA topology and maintain chromosomes in an underwound state. Negative supercoiling favors strand separation, and DNA replication, transcription, recombination and repair, all of which involve strand separation. Also able to catalyze the interconversion of other topological isomers of dsDNA rings, including catenanes and knotted rings. Type II topoisomerases break and join 2 DNA strands simultaneously in an ATP-dependent manner. This is DNA gyrase subunit A from Staphylococcus aureus (strain N315).